We begin with the raw amino-acid sequence, 259 residues long: UPF0246 protein PFLU_0992 (259 aa).

The protein belongs to the UPF0246 family.

The sequence is that of UPF0246 protein PFLU_0992 from Pseudomonas fluorescens (strain SBW25).